Here is a 112-residue protein sequence, read N- to C-terminus: Large ribosomal subunit protein eL31 (112 aa).

This sequence belongs to the eukaryotic ribosomal protein eL31 family. Component of the large ribosomal subunit. Mature ribosomes consist of a small (40S) and a large (60S) subunit. The 40S subunit contains about 32 different proteins and 1 molecule of RNA (18S). The 60S subunit contains 45 different proteins and 3 molecules of RNA (25S, 5.8S and 5S).

It is found in the cytoplasm. Component of the ribosome, a large ribonucleoprotein complex responsible for the synthesis of proteins in the cell. The small ribosomal subunit (SSU) binds messenger RNAs (mRNAs) and translates the encoded message by selecting cognate aminoacyl-transfer RNA (tRNA) molecules. The large subunit (LSU) contains the ribosomal catalytic site termed the peptidyl transferase center (PTC), which catalyzes the formation of peptide bonds, thereby polymerizing the amino acids delivered by tRNAs into a polypeptide chain. The nascent polypeptides leave the ribosome through a tunnel in the LSU and interact with protein factors that function in enzymatic processing, targeting, and the membrane insertion of nascent chains at the exit of the ribosomal tunnel. This chain is Large ribosomal subunit protein eL31, found in Candida albicans (strain SC5314 / ATCC MYA-2876) (Yeast).